A 161-amino-acid polypeptide reads, in one-letter code: MATLQSLADLNRSNTGAVDPANEAPVHVQKLDAQGRAYATGKRKDAVARVWIKPGNGTVTINKRPVETYFARPVLRMILRQPLEIAGRVDQYDITVTVAGGGLSGQAGAVRHGLSKALTYYEPELRAPLKREGFLTRDARVVERKKYGRKKARRSFQFSKR.

It belongs to the universal ribosomal protein uS9 family.

In Methylobacterium radiotolerans (strain ATCC 27329 / DSM 1819 / JCM 2831 / NBRC 15690 / NCIMB 10815 / 0-1), this protein is Small ribosomal subunit protein uS9.